The primary structure comprises 128 residues: Fluoride-specific ion channel FluC (128 aa).

Transmembrane regions (helical) follow at residues 5–25, 35–55, 67–87, and 96–116; these read IVAI…LSIG, LGTL…VVAF, LFVI…SVEV, and FGWA…LTGL. Na(+) contacts are provided by Gly75 and Thr78.

Belongs to the fluoride channel Fluc/FEX (TC 1.A.43) family.

The protein localises to the cell inner membrane. The enzyme catalyses fluoride(in) = fluoride(out). Na(+) is not transported, but it plays an essential structural role and its presence is essential for fluoride channel function. Functionally, fluoride-specific ion channel. Important for reducing fluoride concentration in the cell, thus reducing its toxicity. The polypeptide is Fluoride-specific ion channel FluC (Burkholderia mallei (strain NCTC 10247)).